Consider the following 379-residue polypeptide: Succinyl-diaminopimelate desuccinylase (379 aa).

H68 is a Zn(2+) binding site. D70 is an active-site residue. D101 contacts Zn(2+). The active-site Proton acceptor is E134. E135, E163, and H352 together coordinate Zn(2+).

Belongs to the peptidase M20A family. DapE subfamily. In terms of assembly, homodimer. It depends on Zn(2+) as a cofactor. Co(2+) is required as a cofactor.

The enzyme catalyses N-succinyl-(2S,6S)-2,6-diaminopimelate + H2O = (2S,6S)-2,6-diaminopimelate + succinate. It participates in amino-acid biosynthesis; L-lysine biosynthesis via DAP pathway; LL-2,6-diaminopimelate from (S)-tetrahydrodipicolinate (succinylase route): step 3/3. Functionally, catalyzes the hydrolysis of N-succinyl-L,L-diaminopimelic acid (SDAP), forming succinate and LL-2,6-diaminopimelate (DAP), an intermediate involved in the bacterial biosynthesis of lysine and meso-diaminopimelic acid, an essential component of bacterial cell walls. The chain is Succinyl-diaminopimelate desuccinylase from Dinoroseobacter shibae (strain DSM 16493 / NCIMB 14021 / DFL 12).